Consider the following 559-residue polypeptide: MDIDDIKHNRRVVSNISSLLDNDILCDVIITIGDGEEIKAHKTILAAGSKYFRTLFTTPMIIRDLVTRVNLQMFDKDAVKNIVQYLYNRHISSMNVIDVLKCADYLLIDDLVTDCESYVKDYTNHDTCIYIYHRLYEMSHIPIVKYVKRMVMRNIPTLITTDAFKNAVFEILLDIISTNDGEYVYREGYKVTILLKWLDYNYITEEQLLCILSCIDIQNLDKKSRLLLYSNTTINMYSSCVKFLLDNKQNRNIIPRQLCLVYHDTNYNISNPCILVYNINTMEYNTIYTIHNNIINYSSAVVDNEIIIAGGYNFNNISLNKVYKINIEHRTCVELPPMIKNRCHFSLAVIDDMIYAIGGQNGTIVERSVECYTMGDDTWKMLPDMPDAISSYGMCVFDQYIYIIGGRTEHVKYIPVQHMNEIVDINEHSSDKVIRYDTVNNIWEKLPNLCSGTIRPSVVSHKDDIYVVCDIKDDEINGFKTCIFRYNTKDNYKGWELITTIDSKLTVLHTILHDDAITILHWYESCMIQDKFNIDTYKWTNICYQRSNSYIVHDTLPIY.

The BTB domain occupies 26 to 95; it reads CDVIITIGDG…LYNRHISSMN (70 aa). Residues 128–223 enclose the BACK domain; sequence CIYIYHRLYE…CIDIQNLDKK (96 aa). Kelch repeat units lie at residues 305–352, 353–399, and 401–463; these read EIII…VIDD, MIYA…VFDQ, and IYII…SHKD.

As to quaternary structure, interacts (via BTB domain) with host CUL3.

The protein localises to the host cytoplasm. Functionally, probable substrate-specific adapter of CUL3-containing E3 ubiquitin-protein ligases which mediate the ubiquitination and subsequent proteasomal degradation of host target proteins. The protein is Kelch repeat and BTB domain-containing protein 2 (KBTB2) of Mus musculus (Mouse).